A 122-amino-acid chain; its full sequence is Secreted RxLR effector protein 80 (122 aa).

The first 21 residues, 1–21 (MKKRALPIVIFVISLQQSSQS), serve as a signal peptide directing secretion. Positions 72–75 (RSLR) match the RxLR motif.

Belongs to the RxLR effector family.

It is found in the secreted. The protein resides in the host endoplasmic reticulum membrane. Secreted effector that dos not suppress the host cell death induced by cell death-inducing proteins. The chain is Secreted RxLR effector protein 80 from Plasmopara viticola (Downy mildew of grapevine).